The chain runs to 96 residues: Putative pterin-4-alpha-carbinolamine dehydratase (96 aa).

The protein belongs to the pterin-4-alpha-carbinolamine dehydratase family.

It carries out the reaction (4aS,6R)-4a-hydroxy-L-erythro-5,6,7,8-tetrahydrobiopterin = (6R)-L-erythro-6,7-dihydrobiopterin + H2O. This Prochlorococcus marinus subsp. pastoris (strain CCMP1986 / NIES-2087 / MED4) protein is Putative pterin-4-alpha-carbinolamine dehydratase.